The primary structure comprises 468 residues: Squamosa promoter-binding-like protein 5 (468 aa).

Residues 204–281 (PPRCQAEGCK…TEHNRRRRKP (78 aa)) form an SBP-type zinc finger. Residues cysteine 207, cysteine 212, cysteine 229, histidine 232, cysteine 248, cysteine 251, histidine 255, and cysteine 267 each contribute to the Zn(2+) site. A Bipartite nuclear localization signal motif is present at residues 264–280 (KRSCRKRLTEHNRRRRK). 3 disordered regions span residues 270-305 (RLTEHNRRRRKPTAGGQSSKDSPPPPPSKKGTDASI), 354-374 (TLSLAALPPQEEDDEDEDGGL), and 405-458 (HHHL…SNNN). Over residues 363 to 372 (QEEDDEDEDG) the composition is skewed to acidic residues. Over residues 438–458 (NNNNILSCSSASDQQNSSNNN) the composition is skewed to low complexity.

In terms of tissue distribution, ubiquitous.

The protein resides in the nucleus. Trans-acting factor that binds specifically to the consensus nucleotide sequence 5'-TNCGTACAA-3'. This chain is Squamosa promoter-binding-like protein 5 (SPL5), found in Oryza sativa subsp. japonica (Rice).